A 66-amino-acid chain; its full sequence is Large ribosomal subunit protein uL29 (66 aa).

This sequence belongs to the universal ribosomal protein uL29 family.

This Caldanaerobacter subterraneus subsp. tengcongensis (strain DSM 15242 / JCM 11007 / NBRC 100824 / MB4) (Thermoanaerobacter tengcongensis) protein is Large ribosomal subunit protein uL29.